Consider the following 624-residue polypeptide: Chromosomal replication initiator protein DnaA (624 aa).

The interval M1–A99 is domain I, interacts with DnaA modulators. The disordered stretch occupies residues D88–R284. Residues P100 to A283 form a domain II region. Over residues M102–H112 the composition is skewed to low complexity. Composition is skewed to basic and acidic residues over residues Q118–P141 and G176–A206. Residues P250 to V264 show a composition bias toward gly residues. Residues R284 to A500 are domain III, AAA+ region. ATP-binding residues include G328, G330, K331, and T332. The tract at residues S501 to G624 is domain IV, binds dsDNA.

This sequence belongs to the DnaA family. Oligomerizes as a right-handed, spiral filament on DNA at oriC.

It localises to the cytoplasm. Its function is as follows. Plays an essential role in the initiation and regulation of chromosomal replication. ATP-DnaA binds to the origin of replication (oriC) to initiate formation of the DNA replication initiation complex once per cell cycle. Binds the DnaA box (a 9 base pair repeat at the origin) and separates the double-stranded (ds)DNA. Forms a right-handed helical filament on oriC DNA; dsDNA binds to the exterior of the filament while single-stranded (ss)DNA is stabiized in the filament's interior. The ATP-DnaA-oriC complex binds and stabilizes one strand of the AT-rich DNA unwinding element (DUE), permitting loading of DNA polymerase. After initiation quickly degrades to an ADP-DnaA complex that is not apt for DNA replication. Binds acidic phospholipids. The DnaA box consensus is 5'-(T/C)(T/C)(G/AC)TCCACA-3'. This chain is Chromosomal replication initiator protein DnaA, found in Streptomyces anulatus (Streptomyces chrysomallus).